Reading from the N-terminus, the 172-residue chain is Ribosome maturation factor RimM (172 aa).

The region spanning 95–168 (DEGEFYYHQI…RVDVAIMEGL (74 aa)) is the PRC barrel domain.

The protein belongs to the RimM family. Binds ribosomal protein uS19.

It localises to the cytoplasm. An accessory protein needed during the final step in the assembly of 30S ribosomal subunit, possibly for assembly of the head region. Essential for efficient processing of 16S rRNA. May be needed both before and after RbfA during the maturation of 16S rRNA. It has affinity for free ribosomal 30S subunits but not for 70S ribosomes. This chain is Ribosome maturation factor RimM, found in Streptococcus uberis (strain ATCC BAA-854 / 0140J).